The chain runs to 333 residues: MALAVADTQNETFARSESPTSGPSDQLSTHDLDRHIEKLMRCELIAEQDVKTLCAKAREILAEEGNVQVIDSPVTICGDIHGQFYDLMELFRVGGPVPNTNYLFLGDFVDRGFYSVETFLLLLALKARYPDRMMLIRGNHESRQITQVYGFYDECMRKYGNASVWKHCTEVFDYLALAAVIDGKVFCVHGGLSPSISTMDQIRVIDRKQEVPHDGPMCDLLWSDPEEGNVGWGLSPRGAGYLFGADASKTFCEANSVDLICRAHQLVMEGYKWHFNEKVLTVWSAPNYCYRCGNVAAILELDENLNREFTIFEAAPQENRGAPAKKPHADYFL.

The segment at 1-29 (MALAVADTQNETFARSESPTSGPSDQLST) is disordered. A compositionally biased stretch (polar residues) spans 7–27 (DTQNETFARSESPTSGPSDQL). Mn(2+) is bound by residues Asp79, His81, Asp107, and Asn139. His140 acts as the Proton donor in catalysis. Residues His189 and His264 each coordinate Mn(2+). Residue Leu333 is modified to Leucine methyl ester.

Belongs to the PPP phosphatase family. PP-4 (PP-X) subfamily. Serine/threonine-protein phosphatase 4 (PP4) occurs in different assemblies of the catalytic and one or more regulatory subunits. The regulatory subunits are likely to be ppfr-1, ppfr-2, ppfr-4 and smk-1. Interacts with mei-1. It depends on Mn(2+) as a cofactor. In terms of processing, methylation at the C-terminal Leu-333 is critical for interactions with regulatory subunits.

It is found in the cytoplasm. The protein localises to the cytoskeleton. Its subcellular location is the microtubule organizing center. It localises to the centrosome. It carries out the reaction O-phospho-L-seryl-[protein] + H2O = L-seryl-[protein] + phosphate. The catalysed reaction is O-phospho-L-threonyl-[protein] + H2O = L-threonyl-[protein] + phosphate. Its function is as follows. Protein phosphatase which plays an essential role in meiosis and in early embryonic mitosis. During spermatocyte meiosis and the first embryonic mitosis, regulates centrosome maturation, and thus spindle formation, by recruiting some of the components of the pericentriolar material (PCM). During oocyte meiosis I, regulates meiotic chromosome dynamics including synapsis-independent chromosome pairing, restriction of synapsis to homologous chromosomes, programmed DNA double-strand break initiation and crossover formation resulting in chiasma formation. During oocyte meiosis II and probably together with regulatory subunit ppfr-1, may regulate microtubule severing by dephosphorylating and activating mei-1, a component of the katanin microtubule severing complex. This chain is Serine/threonine-protein phosphatase 4 catalytic subunit 1 (pph-4.1), found in Caenorhabditis briggsae.